We begin with the raw amino-acid sequence, 2178 residues long: Toxin A (2178 aa).

The four-helical bundle stretch occupies residues 1-93 (MLITREQLMK…RELIKNSRTS (93 aa)). Residues 98 to 474 (KNLSFIWIGG…KPEVNSTVFF (377 aa)) enclose the GT44 domain. A glucosyltransferase region region spans residues 98–474 (KNLSFIWIGG…KPEVNSTVFF (377 aa)). Positions 98 to 474 (KNLSFIWIGG…KPEVNSTVFF (377 aa)) are N-acetylglucosaminyltransferase region. Residues 103-105 (IWI), N141, 267-271 (SDILR), and 284-286 (DLD) each bind UDP-N-acetyl-alpha-D-glucosamine. D284, D286, and E520 together coordinate Mg(2+). 523–525 (SSW) contributes to the UDP-N-acetyl-alpha-D-glucosamine binding site. Positions 549-806 (NYEDGLNFNK…RVEQLNKVAE (258 aa)) are autoprocessing region. The 1D-myo-inositol hexakisphosphate site is built by N557, K607, and K651. Positions 574 to 787 (VNSTKIYENY…QISNKYVVYW (214 aa)) constitute a Peptidase C80 domain. H657 functions as the For protease activity in the catalytic mechanism. The Nucleophile; for protease activity role is filled by C707. Residues 758–759 (KR) and K782 contribute to the 1D-myo-inositol hexakisphosphate site. The segment at 807–1485 (FAKDINSIIQ…VYMEGKIFLN (679 aa)) is translocation region. 14 Cell wall-binding repeats span residues 1799 to 1818 (EYGWINIDSRWYFFDSINLI), 1820 to 1839 (KKGYQEIEGERYYFNPNTGV), 1870 to 1889 (YTGWLTLDGNKYYFQSNSKA), 1890 to 1909 (VTGLQKISDKYYYFNDNGQM), 1910 to 1929 (QIKWQIINNNKYYFDGNTGE), 1931 to 1950 (IIGWFNNNKERYYFDSEGRL), 1951 to 1970 (LTGYQVIGDKSYYFSDNING), 2004 to 2023 (YKGWLDLNGNKYYFNSDSIA), 2024 to 2043 (VTGSYNIKGIQYYFNPKTAV), 2045 to 2060 (TNGWYTLDNNNYYVSN), 2064 to 2083 (VLGYQDIDGKGYYFDPSTGI), 2114 to 2133 (YTGWLHLNGNKYYFGYYNSA), 2134 to 2153 (VTGWRVLGGKRYFFNIKTGA), and 2155 to 2174 (TTGLLTLSGKRYYFNEKGEQ).

Belongs to the clostridial glucosylating toxin (LCGT) family. The cofactor is Mn(2+). Requires Mg(2+) as cofactor. Post-translationally, undergoes autocatalytic cleavage to release the N-terminal part (N-acetylglucosaminyltransferase TcdA), which constitutes the active part of the toxin, in the host cytosol. 1D-myo-inositol hexakisphosphate-binding (InsP6) activates the peptidase C80 domain and promotes autoprocessing.

It is found in the secreted. The protein localises to the host endosome membrane. It localises to the host cytoplasm. Its subcellular location is the host cytosol. The protein resides in the host cell membrane. It carries out the reaction L-threonyl-[protein] + UDP-N-acetyl-alpha-D-glucosamine = 3-O-(N-acetyl-alpha-D-glucosaminyl)-L-threonyl-[protein] + UDP + H(+). Its activity is regulated as follows. Protease activity is activated upon binding to 1D-myo-inositol hexakisphosphate (InsP6), which induces conformational reorganization. Its function is as follows. Precursor of a cytotoxin, which enters into host cells and mediates autoprocessing to release the active toxin (N-acetylglucosaminyltransferase TcdA) into the host cytosol. Once entered into host cells, acidification in the endosome promotes the membrane insertion of the translocation region and formation of a pore, leading to translocation of the GT44 and peptidase C80 domains across the endosomal membrane. This activates the peptidase C80 domain and autocatalytic processing, releasing the N-terminal part (N-acetylglucosaminyltransferase TcdA), which constitutes the active part of the toxin, in the cytosol. Active form of the toxin, which is released into the host cytosol following autoprocessing and inactivates small GTPases. Acts by mediating monoglycosylation of small GTPases of the Rho family (Rac1, RhoA, RhoG and Cdc42) in host cells at the conserved threonine residue located in the switch I region ('Thr-37/35'), using UDP-N-acetyl-alpha-D-glucosamine as the sugar donor. Monoglycosylation of host small GTPases completely prevents the recognition of the downstream effector, blocking the GTPases in their inactive form, leading to actin cytoskeleton disruption and cell death. In Clostridium novyi, this protein is Toxin A (tcdA).